Reading from the N-terminus, the 888-residue chain is Serine/threonine-protein phosphatase 1 regulatory subunit 10 (888 aa).

The interval 1 to 348 (MGSGPIDPKE…EPAPPAEPMD (348 aa)) is interaction with TOX4. Residues 73-147 (KLLNNWLTYS…SDWMAVIRSQ (75 aa)) enclose the TFIIS N-terminal domain. 4 disordered regions span residues 147-213 (QSST…STGL), 247-270 (SATAAPGDAAPPAEKKYKPLNTAP), 306-400 (KKKK…KTVT), and 534-853 (VETL…HGGD). Composition is skewed to basic and acidic residues over residues 153–166 (AEKDKKKRKEEGKS) and 174–196 (PLTEVKAETRAEEAPEKKKEKPK). Residue K179 forms a Glycyl lysine isopeptide (Lys-Gly) (interchain with G-Cter in SUMO2) linkage. Low complexity predominate over residues 248-258 (ATAAPGDAAPP). K262 participates in a covalent cross-link: Glycyl lysine isopeptide (Lys-Gly) (interchain with G-Cter in SUMO2). A Phosphoserine modification is found at S313. Residues 325 to 334 (KTSTEQSTAK) show a composition bias toward polar residues. S382 bears the Phosphoserine mark. The segment at 388 to 417 (QLTRKGRKRKTVTWPEEGKLREYFYFELDE) is necessary for interaction with PPP1CA. Residues 393 to 408 (GRKRKTVTWPEEGKLR) are necessary for interaction with PPP1CC. The short motif at 394–423 (RKRKTVTWPEEGKLREYFYFELDETERVNV) is the PP1-binding motif element. Phosphothreonine is present on T398. The segment at 418–619 (TERVNVNKIK…LKQMLVPHGL (202 aa)) is interaction with WDR82. The segment covering 540–551 (GGSGGSPDGAGG) has biased composition (gly residues). Residues S545 and S591 each carry the phosphoserine modification. Positions 583 to 595 (EILTSIMGSPNSH) are enriched in polar residues. Basic and acidic residues predominate over residues 596–611 (PSEELLKQPDYSDKLK). The segment covering 644-655 (PPGPGGPMPGPH) has biased composition (pro residues). R665 bears the Omega-N-methylarginine mark. A compositionally biased stretch (low complexity) spans 674 to 690 (RGGDPFWDGPGDPMRGG). An omega-N-methylarginine mark is found at R693 and R737. Gly residues-rich tracts occupy residues 724-762 (ARGGRSGGGPPNGRGGPGGGGMVGGGGHRPHEGPGGSMG) and 784-794 (GPGGNMGGSGG). Residues 811–851 (PHDVPSHRGHDHRGPPPHEHRGHDGHGGGGHRGHDGGHSHG) show a composition bias toward basic and acidic residues. The C3H1-type zinc-finger motif lies at 854-882 (MSNRPVCRHFMMKGNCRYENNCAFYHPGV).

Component of the PNUTS-PP1 complex (also named PTW/PP1 complex), composed of PPP1R10/PNUTS, TOX4, WDR82, and PPP1CA (or PPP1CB or PPP1CC). Phosphorylated on Ser-398 by PKA within the region necessary for interaction with PPP1CA.

Its subcellular location is the nucleus. It localises to the chromosome. Its function is as follows. Substrate-recognition component of the PNUTS-PP1 protein phosphatase complex, a protein phosphatase 1 (PP1) complex that promotes RNA polymerase II transcription pause-release, allowing transcription elongation. Promoter-proximal pausing by RNA polymerase II is a transcription halt following transcription initiation but prior to elongation, which acts as a checkpoint to control that transcripts are favorably configured for transcriptional elongation. The PNUTS-PP1 complex mediates the release of RNA polymerase II from promoter-proximal region of genes by catalyzing dephosphorylation of proteins involved in transcription, such as AFF4, CDK9, MEPCE, INTS12, NCBP1, POLR2M/GDOWN1 and SUPT6H. The PNUTS-PP1 complex also regulates RNA polymerase II transcription termination by mediating dephosphorylation of SUPT5H in termination zones downstream of poly(A) sites, thereby promoting deceleration of RNA polymerase II transcription. PNUTS-PP1 complex is also involved in the response to replication stress by mediating dephosphorylation of POLR2A at 'Ser-5' of the CTD, promoting RNA polymerase II degradation. The PNUTS-PP1 complex also plays a role in the control of chromatin structure and cell cycle progression during the transition from mitosis into interphase. PNUTS-PP1 complex mediates dephosphorylation of MYC, promoting MYC stability by preventing MYC ubiquitination by the SCF(FBXW7) complex. In addition to acts as a substrate-recognition component, PPP1R10/PNUTS also acts as a nuclear targeting subunit for the PNUTS-PP1 complex. In some context, PPP1R10/PNUTS also acts as an inhibitor of protein phosphatase 1 (PP1) activity by preventing access to substrates, such as RB. This Mus musculus (Mouse) protein is Serine/threonine-protein phosphatase 1 regulatory subunit 10.